A 436-amino-acid polypeptide reads, in one-letter code: 3-ketoacyl-CoA thiolase (436 aa).

Cys99 acts as the Acyl-thioester intermediate in catalysis. Residues His392 and Cys422 each act as proton acceptor in the active site.

Belongs to the thiolase-like superfamily. Thiolase family. In terms of assembly, heterotetramer of two alpha chains (FadJ) and two beta chains (FadI).

The protein localises to the cytoplasm. The catalysed reaction is an acyl-CoA + acetyl-CoA = a 3-oxoacyl-CoA + CoA. It functions in the pathway lipid metabolism; fatty acid beta-oxidation. In terms of biological role, catalyzes the final step of fatty acid oxidation in which acetyl-CoA is released and the CoA ester of a fatty acid two carbons shorter is formed. The sequence is that of 3-ketoacyl-CoA thiolase from Salmonella paratyphi C (strain RKS4594).